The primary structure comprises 333 residues: Homeobox protein Hox-D13 (333 aa).

Positions 1–24 (MDGLRTDGGAAGAAPASSSSSSSV) are disordered. Residues 12-24 (GAAPASSSSSSSV) are compositionally biased toward low complexity. Residues 266–325 (GRKKRVPYTKLQLKELENEYAINKFINKDKRRRISAATNLSERQVTIWFQNRRVKDKKIV) constitute a DNA-binding region (homeobox).

Belongs to the Abd-B homeobox family.

It is found in the nucleus. In terms of biological role, sequence-specific transcription factor that binds gene promoters and activates their transcription. Part of a developmental regulatory system that provides cells with specific positional identities on the anterior-posterior axis. This is Homeobox protein Hox-D13 (HOXD13) from Carollia perspicillata (Seba's short-tailed bat).